The primary structure comprises 179 residues: Peptide deformylase (179 aa).

Fe cation contacts are provided by Cys102 and His144. Residue Glu145 is part of the active site. His148 is a Fe cation binding site.

This sequence belongs to the polypeptide deformylase family. Fe(2+) serves as cofactor.

The catalysed reaction is N-terminal N-formyl-L-methionyl-[peptide] + H2O = N-terminal L-methionyl-[peptide] + formate. Functionally, removes the formyl group from the N-terminal Met of newly synthesized proteins. Requires at least a dipeptide for an efficient rate of reaction. N-terminal L-methionine is a prerequisite for activity but the enzyme has broad specificity at other positions. In Wolbachia sp. subsp. Drosophila simulans (strain wRi), this protein is Peptide deformylase.